A 383-amino-acid chain; its full sequence is Succinyl-diaminopimelate desuccinylase (383 aa).

Position 73 (histidine 73) interacts with Zn(2+). Aspartate 75 is an active-site residue. Aspartate 107 serves as a coordination point for Zn(2+). Glutamate 141 serves as the catalytic Proton acceptor. Zn(2+) contacts are provided by glutamate 142, glutamate 170, and histidine 356.

The protein belongs to the peptidase M20A family. DapE subfamily. Homodimer. The cofactor is Zn(2+). Requires Co(2+) as cofactor.

The catalysed reaction is N-succinyl-(2S,6S)-2,6-diaminopimelate + H2O = (2S,6S)-2,6-diaminopimelate + succinate. Its pathway is amino-acid biosynthesis; L-lysine biosynthesis via DAP pathway; LL-2,6-diaminopimelate from (S)-tetrahydrodipicolinate (succinylase route): step 3/3. In terms of biological role, catalyzes the hydrolysis of N-succinyl-L,L-diaminopimelic acid (SDAP), forming succinate and LL-2,6-diaminopimelate (DAP), an intermediate involved in the bacterial biosynthesis of lysine and meso-diaminopimelic acid, an essential component of bacterial cell walls. This is Succinyl-diaminopimelate desuccinylase from Pseudomonas aeruginosa (strain UCBPP-PA14).